The chain runs to 194 residues: 7-methyl-GTP pyrophosphatase (194 aa).

Asp-69 serves as the catalytic Proton acceptor.

This sequence belongs to the Maf family. YceF subfamily. It depends on a divalent metal cation as a cofactor.

It localises to the cytoplasm. The catalysed reaction is N(7)-methyl-GTP + H2O = N(7)-methyl-GMP + diphosphate + H(+). Nucleoside triphosphate pyrophosphatase that hydrolyzes 7-methyl-GTP (m(7)GTP). May have a dual role in cell division arrest and in preventing the incorporation of modified nucleotides into cellular nucleic acids. The polypeptide is 7-methyl-GTP pyrophosphatase (Sodalis glossinidius (strain morsitans)).